A 1556-amino-acid polypeptide reads, in one-letter code: Lysine-specific demethylase 5C (1556 aa).

Residues 14-55 form the JmjN domain; sequence CPVFEPSWAEFRDPLGYIAKIRPIAEKSGICKIRPPADWQPP. In terms of domain architecture, ARID spans 79–169; it reads TRVKLNYLDQ…IVYPYEMYQS (91 aa). Polar residues predominate over residues 197 to 207; it reads LRQSVQPSKFN. Positions 197-227 are disordered; the sequence is LRQSVQPSKFNSYGRRAKRLQPDPEPTEEDI. Glycyl lysine isopeptide (Lys-Gly) (interchain with G-Cter in SUMO2) cross-links involve residues Lys205, Lys229, Lys244, and Lys274. Residues 257–303 are disordered; that stretch reads LRKKDKEGPECPPTVVVKEESGGDVKVESTSPKTFLESKEELSHSPE. Residues 273–283 are compositionally biased toward basic and acidic residues; the sequence is VKEESGGDVKV. The residue at position 287 (Ser287) is a Phosphoserine. Lys295 participates in a covalent cross-link: Glycyl lysine isopeptide (Lys-Gly) (interchain with G-Cter in SUMO2). A phosphoserine mark is found at Ser301 and Ser317. Residues 324–374 form a PHD-type 1 zinc finger; that stretch reads SYVCRMCSRGDEDDKLLLCDGCDDNYHIFCLLPPLPEIPKGVWRCPKCVMA. Residues 468 to 634 form the JmjC domain; sequence EYATSGWNLN…AGRQCIEHYR (167 aa). Residues His514, Asp517, and His602 each coordinate Fe cation. Ser893 and Ser897 each carry phosphoserine. Lys1127 is covalently cross-linked (Glycyl lysine isopeptide (Lys-Gly) (interchain with G-Cter in SUMO2)). The PHD-type 2 zinc-finger motif lies at 1185–1250; that stretch reads TSVCVCGQVP…KFLCPLCMRS (66 aa). 2 disordered regions span residues 1315–1362 and 1441–1556; these read LQAE…SPEK and ERHG…QQQL. Positions 1335 to 1345 are enriched in basic and acidic residues; sequence PLREGSGKDMP. Ser1359 carries the post-translational modification Phosphoserine. A compositionally biased stretch (basic residues) spans 1445–1460; it reads SRARGRALERRRRRKV. A compositionally biased stretch (basic and acidic residues) spans 1461–1478; the sequence is DRGGEGDDPAREELEPKR. Residues 1485–1500 show a composition bias toward acidic residues; that stretch reads EAEEAQEEEELEEETG. Composition is skewed to polar residues over residues 1513-1522 and 1530-1540; these read SPSTQENQNG and SGPSAPFSTLS. Residues 1541–1556 are compositionally biased toward low complexity; that stretch reads PQLHVPCPQQPPQQQL.

It belongs to the JARID1 histone demethylase family. In terms of assembly, part of two distinct complexes, one containing E2F6, and the other containing REST. Interacts with ZMYND8. Fe(2+) serves as cofactor.

It is found in the nucleus. It catalyses the reaction N(6),N(6),N(6)-trimethyl-L-lysyl(4)-[histone H3] + 3 2-oxoglutarate + 3 O2 = L-lysyl(4)-[histone H3] + 3 formaldehyde + 3 succinate + 3 CO2. Histone demethylase that specifically demethylates 'Lys-4' of histone H3, thereby playing a central role in histone code. Does not demethylate histone H3 'Lys-9', H3 'Lys-27', H3 'Lys-36', H3 'Lys-79' or H4 'Lys-20'. Demethylates trimethylated and dimethylated but not monomethylated H3 'Lys-4'. Participates in transcriptional repression of neuronal genes by recruiting histone deacetylases and REST at neuron-restrictive silencer elements. Represses the CLOCK-BMAL1 heterodimer-mediated transcriptional activation of the core clock component PER2. The chain is Lysine-specific demethylase 5C (KDM5C) from Canis lupus familiaris (Dog).